The chain runs to 456 residues: Argininosuccinate lyase (456 aa).

This sequence belongs to the lyase 1 family. Argininosuccinate lyase subfamily.

The protein resides in the cytoplasm. The catalysed reaction is 2-(N(omega)-L-arginino)succinate = fumarate + L-arginine. It participates in amino-acid biosynthesis; L-arginine biosynthesis; L-arginine from L-ornithine and carbamoyl phosphate: step 3/3. The chain is Argininosuccinate lyase from Listeria monocytogenes serotype 4a (strain HCC23).